The sequence spans 331 residues: Vitamin B12 import system permease protein BtuC (331 aa).

7 consecutive transmembrane segments (helical) span residues 21-43, 63-85, 90-112, 116-138, 151-173, 193-210, and 239-261; these read LALL…ERWI, PRTL…MQAV, LAEP…TVLL, LLPV…FLLL, LLIG…YFST, WRHG…LWLS, and VLVL…IAFI.

Belongs to the binding-protein-dependent transport system permease family. FecCD subfamily. In terms of assembly, the complex is composed of two ATP-binding proteins (BtuD), two transmembrane proteins (BtuC) and a solute-binding protein (BtuF).

It localises to the cell inner membrane. Its function is as follows. Part of the ABC transporter complex BtuCDF involved in vitamin B12 import. Involved in the translocation of the substrate across the membrane. The chain is Vitamin B12 import system permease protein BtuC from Pectobacterium atrosepticum (strain SCRI 1043 / ATCC BAA-672) (Erwinia carotovora subsp. atroseptica).